Here is a 341-residue protein sequence, read N- to C-terminus: Tubulin beta chain (341 aa).

Residues serine 64, glycine 68, threonine 69, glycine 70, asparagine 130, and asparagine 152 each coordinate GTP.

This sequence belongs to the tubulin family. As to quaternary structure, dimer of alpha and beta chains. A typical microtubule is a hollow water-filled tube with an outer diameter of 25 nm and an inner diameter of 15 nM. Alpha-beta heterodimers associate head-to-tail to form protofilaments running lengthwise along the microtubule wall with the beta-tubulin subunit facing the microtubule plus end conferring a structural polarity. Microtubules usually have 13 protofilaments but different protofilament numbers can be found in some organisms and specialized cells. It depends on Mg(2+) as a cofactor.

The protein localises to the cytoplasm. It is found in the cytoskeleton. In terms of biological role, tubulin is the major constituent of microtubules, a cylinder consisting of laterally associated linear protofilaments composed of alpha- and beta-tubulin heterodimers. Microtubules grow by the addition of GTP-tubulin dimers to the microtubule end, where a stabilizing cap forms. Below the cap, tubulin dimers are in GDP-bound state, owing to GTPase activity of alpha-tubulin. In Haliotis discus (Abalone), this protein is Tubulin beta chain.